The primary structure comprises 113 residues: uncharacterized protein (113 aa).

The next 2 membrane-spanning stretches (helical) occupy residues 1–21 (MLIAGTLCVCAAVISAVFGTW) and 48–68 (IMLAAGGVVALVAVAHTALIV).

The protein to M.tuberculosis Rv0039.

It is found in the cell membrane. This is an uncharacterized protein from Mycobacterium leprae (strain TN).